A 930-amino-acid polypeptide reads, in one-letter code: Isoleucine--tRNA ligase (930 aa).

Positions Pro-57–His-67 match the 'HIGH' region motif. Glu-555 provides a ligand contact to L-isoleucyl-5'-AMP. Residues Lys-596–Ser-600 carry the 'KMSKS' region motif. Lys-599 contacts ATP. Residues Cys-896, Cys-899, Cys-916, and Cys-919 each coordinate Zn(2+).

It belongs to the class-I aminoacyl-tRNA synthetase family. IleS type 1 subfamily. In terms of assembly, monomer. The cofactor is Zn(2+).

It is found in the cytoplasm. It catalyses the reaction tRNA(Ile) + L-isoleucine + ATP = L-isoleucyl-tRNA(Ile) + AMP + diphosphate. In terms of biological role, catalyzes the attachment of isoleucine to tRNA(Ile). As IleRS can inadvertently accommodate and process structurally similar amino acids such as valine, to avoid such errors it has two additional distinct tRNA(Ile)-dependent editing activities. One activity is designated as 'pretransfer' editing and involves the hydrolysis of activated Val-AMP. The other activity is designated 'posttransfer' editing and involves deacylation of mischarged Val-tRNA(Ile). The polypeptide is Isoleucine--tRNA ligase (Moorella thermoacetica (strain ATCC 39073 / JCM 9320)).